The following is a 304-amino-acid chain: Acetyl-coenzyme A carboxylase carboxyl transferase subunit beta (304 aa).

The CoA carboxyltransferase N-terminal domain occupies 23 to 292 (VWTKCDSCGQ…PNPDAPREGV (270 aa)). The Zn(2+) site is built by Cys-27, Cys-30, Cys-46, and Cys-49. A C4-type zinc finger spans residues 27–49 (CDSCGQVLYRAELERNLEVCPKC). The tract at residues 283–304 (PNPDAPREGVVVPPAPDQESEA) is disordered.

This sequence belongs to the AccD/PCCB family. In terms of assembly, acetyl-CoA carboxylase is a heterohexamer composed of biotin carboxyl carrier protein (AccB), biotin carboxylase (AccC) and two subunits each of ACCase subunit alpha (AccA) and ACCase subunit beta (AccD). The cofactor is Zn(2+).

The protein resides in the cytoplasm. It carries out the reaction N(6)-carboxybiotinyl-L-lysyl-[protein] + acetyl-CoA = N(6)-biotinyl-L-lysyl-[protein] + malonyl-CoA. Its pathway is lipid metabolism; malonyl-CoA biosynthesis; malonyl-CoA from acetyl-CoA: step 1/1. Its function is as follows. Component of the acetyl coenzyme A carboxylase (ACC) complex. Biotin carboxylase (BC) catalyzes the carboxylation of biotin on its carrier protein (BCCP) and then the CO(2) group is transferred by the transcarboxylase to acetyl-CoA to form malonyl-CoA. This is Acetyl-coenzyme A carboxylase carboxyl transferase subunit beta from Salmonella agona (strain SL483).